Reading from the N-terminus, the 496-residue chain is Probable glycine betaine transporter (496 aa).

Helical transmembrane passes span 11–31 (TVLYISSAIALLFVLWGVFLP), 49–69 (FGWLYLLAVAIFIIFVFGIAI), 89–109 (FQWFAMLFGGGMGIGLVFWSV), 136–156 (VVFFHWGIHAWVNFAIAGLAL), 188–208 (AIDILAVFATIFGIATSLGLG), 219–239 (IWGIPAGPLTISLVIAVITVI), 260–280 (VWLSVAFMVFIFYFGGKVFIL), 306–326 (WVGGWTIFYWAWWIAWAPFVG), 341–361 (FVFAVTLLPVGFSFIWLAIYG), 396–416 (LYAITGPLAILLIVTCFVGAA), 441–461 (FWGIMQGAMTIVLIVVGGTAA), and 468–488 (ASIASAFPFMLIMLVMCYSIL).

This sequence belongs to the BCCT transporter (TC 2.A.15) family.

Its subcellular location is the cell membrane. Functionally, probably acts in the uptake of glycine betaine. May function in the pathway that allows anaerobic methylotrophic growth of D.hafniense using glycine betaine. The polypeptide is Probable glycine betaine transporter (Desulfitobacterium hafniense (strain Y51)).